The primary structure comprises 291 residues: Citrate lyase subunit beta (291 aa).

Arg66 and Glu129 together coordinate substrate. Mg(2+)-binding residues include Glu129 and Asp156.

Belongs to the HpcH/HpaI aldolase family. Citrate lyase beta subunit subfamily. As to quaternary structure, oligomer with a subunit composition of (alpha,beta,gamma)6. The cofactor is Mg(2+).

The protein resides in the cytoplasm. The catalysed reaction is citrate = oxaloacetate + acetate. It carries out the reaction (3S)-citryl-CoA = oxaloacetate + acetyl-CoA. Represents a citryl-ACP lyase. This is Citrate lyase subunit beta (citE) from Haemophilus influenzae (strain ATCC 51907 / DSM 11121 / KW20 / Rd).